The sequence spans 196 residues: GTP cyclohydrolase-2 (196 aa).

49 to 53 contributes to the GTP binding site; that stretch reads RVHSE. Zn(2+)-binding residues include C54, C65, and C67. GTP is bound by residues Q70, 92-94, and T114; that span reads EGR. D126 (proton acceptor) is an active-site residue. The active-site Nucleophile is the R128. Positions 149 and 154 each coordinate GTP.

It belongs to the GTP cyclohydrolase II family. In terms of assembly, homodimer. The cofactor is Zn(2+).

It carries out the reaction GTP + 4 H2O = 2,5-diamino-6-hydroxy-4-(5-phosphoribosylamino)-pyrimidine + formate + 2 phosphate + 3 H(+). Its pathway is cofactor biosynthesis; riboflavin biosynthesis; 5-amino-6-(D-ribitylamino)uracil from GTP: step 1/4. Catalyzes the conversion of GTP to 2,5-diamino-6-ribosylamino-4(3H)-pyrimidinone 5'-phosphate (DARP), formate and pyrophosphate. This is GTP cyclohydrolase-2 from Escherichia coli O45:K1 (strain S88 / ExPEC).